The chain runs to 568 residues: Dihydroxy-acid dehydratase (568 aa).

Cys-59 is a binding site for [2Fe-2S] cluster. Asp-91 serves as a coordination point for Mg(2+). Cys-132 is a [2Fe-2S] cluster binding site. 2 residues coordinate Mg(2+): Asp-133 and Lys-134. Lys-134 carries the N6-carboxylysine modification. Cys-204 is a binding site for [2Fe-2S] cluster. Residue Glu-456 coordinates Mg(2+). Ser-482 functions as the Proton acceptor in the catalytic mechanism.

It belongs to the IlvD/Edd family. Homodimer. The cofactor is [2Fe-2S] cluster. Requires Mg(2+) as cofactor.

The enzyme catalyses (2R)-2,3-dihydroxy-3-methylbutanoate = 3-methyl-2-oxobutanoate + H2O. It carries out the reaction (2R,3R)-2,3-dihydroxy-3-methylpentanoate = (S)-3-methyl-2-oxopentanoate + H2O. It participates in amino-acid biosynthesis; L-isoleucine biosynthesis; L-isoleucine from 2-oxobutanoate: step 3/4. It functions in the pathway amino-acid biosynthesis; L-valine biosynthesis; L-valine from pyruvate: step 3/4. In terms of biological role, functions in the biosynthesis of branched-chain amino acids. Catalyzes the dehydration of (2R,3R)-2,3-dihydroxy-3-methylpentanoate (2,3-dihydroxy-3-methylvalerate) into 2-oxo-3-methylpentanoate (2-oxo-3-methylvalerate) and of (2R)-2,3-dihydroxy-3-methylbutanoate (2,3-dihydroxyisovalerate) into 2-oxo-3-methylbutanoate (2-oxoisovalerate), the penultimate precursor to L-isoleucine and L-valine, respectively. This is Dihydroxy-acid dehydratase from Verminephrobacter eiseniae (strain EF01-2).